We begin with the raw amino-acid sequence, 224 residues long: Voltage-dependent calcium channel gamma-1 subunit (224 aa).

Residues Met-1–Arg-10 are Cytoplasmic-facing. The helical transmembrane segment at Val-11–Thr-29 threads the bilayer. The Extracellular segment spans residues Asp-30–Ala-110. 2 N-linked (GlcNAc...) asparagine glycosylation sites follow: Asn-43 and Asn-81. Residues Cys-57 and Cys-82 are joined by a disulfide bond. Residues Ala-111–Phe-131 traverse the membrane as a helical segment. The Cytoplasmic segment spans residues Arg-132–Asp-136. Residues Tyr-137 to Val-157 form a helical membrane-spanning segment. At Glu-158–Gly-181 the chain is on the extracellular side. Residues Trp-182–Leu-206 traverse the membrane as a helical segment. Residues Pro-207–His-224 are Cytoplasmic-facing.

This sequence belongs to the PMP-22/EMP/MP20 family. CACNG subfamily. Component of a calcium channel complex consisting of a pore-forming alpha subunit (CACNA1S) and the ancillary subunits CACNB1 or CACNB2, CACNG1 and CACNA2D1. The channel complex contains alpha, beta, gamma and delta subunits in a 1:1:1:1 ratio, i.e. it contains either CACNB1 or CACNB2. Post-translationally, N-glycosylated.

Its subcellular location is the cell membrane. It localises to the sarcolemma. Regulatory subunit of the voltage-gated calcium channel that gives rise to L-type calcium currents in skeletal muscle. Regulates channel inactivation kinetics. The protein is Voltage-dependent calcium channel gamma-1 subunit (CACNG1) of Sus scrofa (Pig).